A 635-amino-acid polypeptide reads, in one-letter code: 1-deoxy-D-xylulose-5-phosphate synthase (635 aa).

Thiamine diphosphate-binding positions include H74 and G115–A117. Residue D146 coordinates Mg(2+). Thiamine diphosphate-binding positions include G147 to A148, N175, Y285, and E367. Position 175 (N175) interacts with Mg(2+).

It belongs to the transketolase family. DXPS subfamily. As to quaternary structure, homodimer. Mg(2+) is required as a cofactor. The cofactor is thiamine diphosphate.

The enzyme catalyses D-glyceraldehyde 3-phosphate + pyruvate + H(+) = 1-deoxy-D-xylulose 5-phosphate + CO2. It participates in metabolic intermediate biosynthesis; 1-deoxy-D-xylulose 5-phosphate biosynthesis; 1-deoxy-D-xylulose 5-phosphate from D-glyceraldehyde 3-phosphate and pyruvate: step 1/1. Its function is as follows. Catalyzes the acyloin condensation reaction between C atoms 2 and 3 of pyruvate and glyceraldehyde 3-phosphate to yield 1-deoxy-D-xylulose-5-phosphate (DXP). In Anaeromyxobacter sp. (strain Fw109-5), this protein is 1-deoxy-D-xylulose-5-phosphate synthase.